Consider the following 327-residue polypeptide: 2-methoxy-6-polyprenyl-1,4-benzoquinol methylase, mitochondrial (327 aa).

The N-terminal 42 residues, Met-1–Leu-42, are a transit peptide targeting the mitochondrion. S-adenosyl-L-methionine is bound by residues Thr-117, Asp-171, and Asp-199 to Ala-200.

This sequence belongs to the class I-like SAM-binding methyltransferase superfamily. MenG/UbiE family. Component of a multi-subunit COQ enzyme complex, composed of at least COQ3, COQ4, COQ5, COQ6, COQ7 and COQ9. Interacts with PYURF; the interaction is direct, stabilizes COQ5 protein and associates PYURF with COQ enzyme complex. As to expression, widely expressed, with highest levels in liver, lung, placenta and skeletal muscle.

The protein localises to the mitochondrion inner membrane. The enzyme catalyses 2-methoxy-6-(all-trans-decaprenyl)benzene-1,4-diol + S-adenosyl-L-methionine = 5-methoxy-2-methyl-3-(all-trans-decaprenyl)benzene-1,4-diol + S-adenosyl-L-homocysteine + H(+). Its pathway is cofactor biosynthesis; ubiquinone biosynthesis. Methyltransferase required for the conversion of 2-decaprenyl-6-methoxy-1,4-benzoquinol (DDMQH2) to 2-decaprenyl-3-methyl-6-methoxy-1,4-benzoquinol (DMQH2). The polypeptide is 2-methoxy-6-polyprenyl-1,4-benzoquinol methylase, mitochondrial (Homo sapiens (Human)).